A 1415-amino-acid chain; its full sequence is MSNWDYLDEVDILPKLPPNFDELRESKKWQERKEALEALLKVLTDNERLSTKASYAELIGHLQMVLAKDANINCQALAAKCIGKFATGLRAKFSSFAGPLLPVIFEKMKEKKPMLREPLVDCSNEVGRTMQSLETGQEDILAALAKPNPQIKQQTALFVARQLDLVVPAKQPKGFIKAVVPVFGKLTGDADQDVREASLQGLGAVQRIIGDKNVKNLLGDASSDEGKMKKIGEYAEKSTASFAEEQAKNAPPVAPTSSTPSASAASGDPSGGTATAVVSSGAPVAEADPWDFLDAFDVLSKMPDGFDTNIESKKWQERKEALEGLLQLITANPKLDPKANYGALVERLQKVLEKDANINVAALAANCITGIANGLRTKFQPFAVSVTPIIFEKFKEKKPTLRDPLVACIDAVVATTNLEAVGEIVLAALGKPNPSIKTQTDLFLQRCFMKLNSQTMPKKTLKTLIPSLIKHSGDSDSEVREASYAAMGAMMRAIGEKPSLQLLADIASDNLKMSKIKEFHQKALDEAGPAEIAEMVKSIHKADAPPAAAPPKKTAPPKKQPEDEEVVEEEDEPLKPPPGDKKKKVPVKENEENEPPVVAPKAELLLSDNEDKKQRIKEEKQLKLVKWNFQAPTDEHISQLQTLLGNQAKVSLMSQLFHKDFKQHLAALDSLVRLADTSPRSLLSNSDLLLKWCTLRFFETNPAALIKVLELCKVIVELIRDTETPMSQEEVSAFVPYLLLKTGEAKDNMRTSVRDIVNVLSDVVGPLKMTPMLLDALKSKNARQRSECLLVIEYYITNAGISPLKSLSVEKTVAPFVGDKDVNVRNAAINVLVACFKFEGDQMWKAAGRMADKDKSLVEERIKRTGVKPGSGVVTSPPTGGPKILVPQQQGSVVRRPASRSRTREPEPEEVQSDTFTIRQDTMPPKTSSRYALRDDVFSSAMGRLDGTQVITPPQPVNGWSNNTFQMKRTNSSSSISSIDTSDQIQRSINNISSSLADVAQDAMFQVTYVLNQPEQRHLVDRRADLVFRASAAQLDLVIEEFNAGRDVSGTMDACTQMLFILMGGVETEHGLEPLNASPDTVKAIISSVLRCIIQIGNTESGYGMARSLNRLAMRLIYRVELSNLLCGLILAMTESLQMNTGITELVSKLSSKWCDELEKRRAQLRASDIVDSFNAFYVCALTELKMDISDSHILIVDNYLERVILQQGDVVLDAARRLSRPHMHLTSMINKILQMMRERKIDPIMPGTLEARMPQEDEAVVVRSGVQVSIDNILRDTSMAVKHIEQLNILIASSDRSWNEYMEYLKNNPMGELIKELVGECSRKKRIDFNLSHVVKSSMAVFKAMAATGPVQEEGRITPTDINRMDTMIVGTPLSRGDATITRARGNMIRPKRTTLSRDQMANIRHTLDRVKNH.

TOG stretches follow at residues 1 to 250 (MSNW…AKNA) and 251 to 530 (PPVA…AGPA). Residues 21-48 (DELRESKKWQERKEALEALLKVLTDNER) are a coiled coil. HEAT repeat units follow at residues 30-68 (QERKEALEALLKVLTDNERLSTKASYAELIGHLQMVLAK), 95-132 (SFAGPLLPVIFEKMKEKKPMLREPLVDCSNEVGRTMQS), 135-172 (TGQEDILAALAKPNPQIKQQTALFVARQLDLVVPAKQP), and 179-217 (VVPVFGKLTGDADQDVREASLQGLGAVQRIIGDKNVKNL). Residues 243-278 (AEEQAKNAPPVAPTSSTPSASAASGDPSGGTATAVV) form a disordered region. Residues 255 to 276 (PTSSTPSASAASGDPSGGTATA) show a composition bias toward low complexity. 4 HEAT repeats span residues 339–377 (ANYGALVERLQKVLEKDANINVAALAANCITGIANGLRT), 381–418 (PFAVSVTPIIFEKFKEKKPTLRDPLVACIDAVVATTNL), 420–457 (AVGEIVLAALGKPNPSIKTQTDLFLQRCFMKLNSQTMP), and 464–502 (LIPSLIKHSGDSDSEVREASYAAMGAMMRAIGEKPSLQL). Residues 544 to 603 (APPAAAPPKKTAPPKKQPEDEEVVEEEDEPLKPPPGDKKKKVPVKENEENEPPVVAPKAE) form a disordered region. Residues 562 to 572 (EDEEVVEEEDE) are compositionally biased toward acidic residues. Residues 602 to 867 (AELLLSDNED…VEERIKRTGV (266 aa)) are TOG 3. HEAT repeat units lie at residues 706 to 743 (IKVLELCKVIVELIRDTETPMSQEEVSAFVPYLLLKTG), 764 to 801 (VGPLKMTPMLLDALKSKNARQRSECLLVIEYYITNAGI), and 804 to 841 (LKSLSVEKTVAPFVGDKDVNVRNAAINVLVACFKFEGD). Residues 867 to 914 (VKPGSGVVTSPPTGGPKILVPQQQGSVVRRPASRSRTREPEPEEVQSD) are disordered.

The protein belongs to the TOG/XMAP215 family. In terms of assembly, interacts with tac-1 to form a heterodimer.

The protein localises to the cytoplasm. The protein resides in the cytoskeleton. It localises to the spindle pole. Its subcellular location is the microtubule organizing center. It is found in the centrosome. Functionally, plays a major role in organizing microtubules and spindle poles during mitosis and meiosis in one-cell stage embryos. Required for default nucleus positioning in oocytes. This is Zygote defective protein 9 from Caenorhabditis elegans.